A 350-amino-acid polypeptide reads, in one-letter code: Protein RecA (350 aa).

An ATP-binding site is contributed by 67 to 74 (GPESSGKT).

This sequence belongs to the RecA family.

The protein localises to the cytoplasm. Its function is as follows. Can catalyze the hydrolysis of ATP in the presence of single-stranded DNA, the ATP-dependent uptake of single-stranded DNA by duplex DNA, and the ATP-dependent hybridization of homologous single-stranded DNAs. It interacts with LexA causing its activation and leading to its autocatalytic cleavage. The protein is Protein RecA of Chromobacterium violaceum (strain ATCC 12472 / DSM 30191 / JCM 1249 / CCUG 213 / NBRC 12614 / NCIMB 9131 / NCTC 9757 / MK).